We begin with the raw amino-acid sequence, 658 residues long: Structure-specific endonuclease subunit SLX1 (658 aa).

The 81-residue stretch at 12 to 92 (PFYACYFLRS…AKPHLSRHLK (81 aa)) folds into the GIY-YIG domain. Disordered stretches follow at residues 29–52 (YIGS…QGAY), 239–269 (GVAE…ETLP), 288–328 (PIPQ…NGVD), and 594–658 (TTSR…IDLT). Composition is skewed to basic and acidic residues over residues 308–324 (KLSD…HDAE) and 627–640 (SKID…DTKK). A compositionally biased stretch (polar residues) spans 641 to 652 (NTTQKAKSNETS).

This sequence belongs to the SLX1 family. As to quaternary structure, forms a heterodimer with SLX4. A divalent metal cation serves as cofactor.

It is found in the nucleus. Its function is as follows. Catalytic subunit of the SLX1-SLX4 structure-specific endonuclease that resolves DNA secondary structures generated during DNA repair and recombination. Has endonuclease activity towards branched DNA substrates, introducing single-strand cuts in duplex DNA close to junctions with ss-DNA. This chain is Structure-specific endonuclease subunit SLX1, found in Mycosarcoma maydis (Corn smut fungus).